The primary structure comprises 196 residues: Large ribosomal subunit protein eL15 (196 aa).

The segment at 159 to 196 (RAYRGRTSAGQRGRGQQKRGKGTEHTRPSIRANDKRGK) is disordered. The segment covering 179-196 (KGTEHTRPSIRANDKRGK) has biased composition (basic and acidic residues).

This sequence belongs to the eukaryotic ribosomal protein eL15 family.

In Natronomonas pharaonis (strain ATCC 35678 / DSM 2160 / CIP 103997 / JCM 8858 / NBRC 14720 / NCIMB 2260 / Gabara) (Halobacterium pharaonis), this protein is Large ribosomal subunit protein eL15.